The following is a 466-amino-acid chain: Bifunctional protein GlmU (466 aa).

A pyrophosphorylase region spans residues 1 to 233; the sequence is MLHKSVLGLV…ADEAMGANDR (233 aa). Residues 11–14, lysine 25, glutamine 79, and 84–85 contribute to the UDP-N-acetyl-alpha-D-glucosamine site; these read LAAG and GT. Aspartate 108 contributes to the Mg(2+) binding site. UDP-N-acetyl-alpha-D-glucosamine contacts are provided by glycine 143, glutamate 158, asparagine 173, and asparagine 231. Asparagine 231 is a Mg(2+) binding site. Positions 234–254 are linker; that stretch reads AQLAALEAVYRQRKVQELFAQ. Residues 255–466 form an N-acetyltransferase region; it reads GVTLIDPNRI…QKKKEHKNDA (212 aa). The UDP-N-acetyl-alpha-D-glucosamine site is built by arginine 337 and lysine 355. The Proton acceptor role is filled by histidine 367. UDP-N-acetyl-alpha-D-glucosamine-binding residues include tyrosine 370 and asparagine 381. Residues alanine 384, 390–391, serine 409, alanine 427, and arginine 444 each bind acetyl-CoA; that span reads NY.

It in the N-terminal section; belongs to the N-acetylglucosamine-1-phosphate uridyltransferase family. The protein in the C-terminal section; belongs to the transferase hexapeptide repeat family. Homotrimer. Requires Mg(2+) as cofactor.

Its subcellular location is the cytoplasm. The enzyme catalyses alpha-D-glucosamine 1-phosphate + acetyl-CoA = N-acetyl-alpha-D-glucosamine 1-phosphate + CoA + H(+). It catalyses the reaction N-acetyl-alpha-D-glucosamine 1-phosphate + UTP + H(+) = UDP-N-acetyl-alpha-D-glucosamine + diphosphate. It functions in the pathway nucleotide-sugar biosynthesis; UDP-N-acetyl-alpha-D-glucosamine biosynthesis; N-acetyl-alpha-D-glucosamine 1-phosphate from alpha-D-glucosamine 6-phosphate (route II): step 2/2. The protein operates within nucleotide-sugar biosynthesis; UDP-N-acetyl-alpha-D-glucosamine biosynthesis; UDP-N-acetyl-alpha-D-glucosamine from N-acetyl-alpha-D-glucosamine 1-phosphate: step 1/1. Its pathway is bacterial outer membrane biogenesis; LPS lipid A biosynthesis. In terms of biological role, catalyzes the last two sequential reactions in the de novo biosynthetic pathway for UDP-N-acetylglucosamine (UDP-GlcNAc). The C-terminal domain catalyzes the transfer of acetyl group from acetyl coenzyme A to glucosamine-1-phosphate (GlcN-1-P) to produce N-acetylglucosamine-1-phosphate (GlcNAc-1-P), which is converted into UDP-GlcNAc by the transfer of uridine 5-monophosphate (from uridine 5-triphosphate), a reaction catalyzed by the N-terminal domain. In Dichelobacter nodosus (strain VCS1703A), this protein is Bifunctional protein GlmU.